Reading from the N-terminus, the 274-residue chain is Thiamine kinase (274 aa).

The protein belongs to the thiamine kinase family.

It carries out the reaction thiamine + ATP = thiamine phosphate + ADP + H(+). The protein operates within cofactor biosynthesis; thiamine diphosphate biosynthesis; thiamine phosphate from thiamine: step 1/1. Catalyzes the ATP-dependent phosphorylation of thiamine to thiamine phosphate. Is involved in thiamine salvage. The protein is Thiamine kinase of Escherichia coli O9:H4 (strain HS).